The primary structure comprises 531 residues: Histone-arginine methyltransferase CARMER (531 aa).

The SAM-dependent MTase PRMT-type domain maps to 141 to 450 (ASQYFQFYGY…QSYDVTIDLH (310 aa)). S-adenosyl-L-methionine contacts are provided by Gln-154, Arg-163, Gly-187, Glu-209, Glu-238, and Thr-266. Residue Arg-501 is modified to Asymmetric dimethylarginine; by autocatalysis.

The protein belongs to the class I-like SAM-binding methyltransferase superfamily. Protein arginine N-methyltransferase family. Homodimer. In terms of processing, the dimethylated protein is the major form.

It is found in the cytoplasm. The protein localises to the nucleus. The catalysed reaction is L-arginyl-[protein] + 2 S-adenosyl-L-methionine = N(omega),N(omega)-dimethyl-L-arginyl-[protein] + 2 S-adenosyl-L-homocysteine + 2 H(+). Methylates (mono- and asymmetric dimethylation) the guanidino nitrogens of arginyl residues in proteins. May methylate histone H3 at 'Arg-17' and activate transcription via chromatin remodeling. The chain is Histone-arginine methyltransferase CARMER (Art4) from Drosophila ananassae (Fruit fly).